Here is a 2030-residue protein sequence, read N- to C-terminus: Dedicator of cytokinesis protein 3 (2030 aa).

One can recognise an SH3 domain in the interval 6–67; the sequence is EEEKYGVVIC…PANYIHLKKA (62 aa). The C2 DOCK-type domain occupies 421–599; that stretch reads RNDLYLTLEK…ESFFISTQLS (179 aa). The 408-residue stretch at 1228-1635 folds into the DOCKER domain; it reads KSEINKEEMY…LYHEFPGLDK (408 aa). Disordered regions lie at residues 1641–1662, 1734–1771, 1849–1927, and 1951–2030; these read SGTS…PESI, SSSQ…SLPD, DTPP…ADED, and QPCR…RGEQ. The residue at position 1658 (serine 1658) is a Phosphoserine. Low complexity predominate over residues 1734-1754; it reads SSSQASPSSSSLSSTHSAPSQ. A compositionally biased stretch (polar residues) spans 1755-1765; it reads MITSAPSSARG. The span at 1880–1902 shows a compositional bias: low complexity; the sequence is GSNSTLSGSASSGVSSLSESNFG. Residues 1967 to 1977 show a composition bias toward pro residues; sequence PMDPPALPPKP. Positions 1970-1976 match the SH3-binding motif; that stretch reads PPALPPK. Composition is skewed to basic and acidic residues over residues 1984 to 2001 and 2014 to 2030; these read ALEH…ERPR and AKEE…RGEQ.

The protein belongs to the DOCK family. Interacts with presenilin proteins PSEN1 and PSEN2. Interacts with CRK. As to expression, in normal brains, it is localized in the neuropil, and occasionally in the pyramidal cells, while in Alzheimer disease brains, it is associated with neurofibrillary tangles.

It is found in the cytoplasm. Functionally, potential guanine nucleotide exchange factor (GEF). GEF proteins activate some small GTPases by exchanging bound GDP for free GTP. Its interaction with presenilin proteins as well as its ability to stimulate Tau/MAPT phosphorylation suggest that it may be involved in Alzheimer disease. Ectopic expression in nerve cells decreases the secretion of amyloid-beta APBA1 protein and lowers the rate of cell-substratum adhesion, suggesting that it may affect the function of some small GTPase involved in the regulation of actin cytoskeleton or cell adhesion receptors. The sequence is that of Dedicator of cytokinesis protein 3 (DOCK3) from Homo sapiens (Human).